Consider the following 637-residue polypeptide: Threonine--tRNA ligase (637 aa).

The region spanning 1–61 is the TGS domain; that stretch reads MLNITLPDGS…VEDSAVQIIT (61 aa). The segment at 242 to 533 is catalytic; the sequence is DHRKLGKQLD…LIENHAGSFP (292 aa). Residues Cys-333, His-384, and His-510 each contribute to the Zn(2+) site.

Belongs to the class-II aminoacyl-tRNA synthetase family. In terms of assembly, homodimer. Zn(2+) is required as a cofactor.

It localises to the cytoplasm. It carries out the reaction tRNA(Thr) + L-threonine + ATP = L-threonyl-tRNA(Thr) + AMP + diphosphate + H(+). Functionally, catalyzes the attachment of threonine to tRNA(Thr) in a two-step reaction: L-threonine is first activated by ATP to form Thr-AMP and then transferred to the acceptor end of tRNA(Thr). Also edits incorrectly charged L-seryl-tRNA(Thr). In Neisseria meningitidis serogroup A / serotype 4A (strain DSM 15465 / Z2491), this protein is Threonine--tRNA ligase.